Here is a 955-residue protein sequence, read N- to C-terminus: Anoctamin-4 (955 aa).

Residues 1–352 (MEASSSGITN…FGEKIGLYFA (352 aa)) are Cytoplasmic-facing. Residues 73–97 (KDDDSLLHPGNLTSTSEDTSRLEAG) form a disordered region. Residues 353–373 (WLGWYTGMLFPAAFIGLFVFL) form a helical membrane-spanning segment. The Extracellular portion of the chain corresponds to 374 to 424 (YGVTTLDHCQVSKEVCQATDIIMCPVCDKYCPFMRLSDSCVYAKVTHLFDN). A helical membrane pass occupies residues 425-445 (GATVFFAVFMAVWATVFLEFW). The Cytoplasmic portion of the chain corresponds to 446–505 (KRRRAVIAYDWDLIDWEEEEEEIRPQFEAKYSKKERMNPISGKPEPYQAFTDKCSRLIVS). The helical transmembrane segment at 506 to 526 (ASGIFFMICVVIAAVFGIVIY) threads the bilayer. At 527 to 547 (RVVTVSTFAAFKWALIRNNSQ) the chain is on the extracellular side. The N-linked (GlcNAc...) asparagine glycan is linked to asparagine 544. The chain crosses the membrane as a helical span at residues 548 to 568 (VATTGTAVCINFCIIMLLNVL). Topologically, residues 569 to 595 (YEKVALLLTNLEQPRTESEWENSFTLK) are cytoplasmic. Residues 596–616 (MFLFQFVNLNSSTFYIAFFLG) form a helical membrane-spanning segment. The Extracellular segment spans residues 617-715 (RFTGHPGAYL…AYGLFDEYLE (99 aa)). The helical transmembrane segment at 716 to 736 (MILQFGFTTIFVAAFPLAPLL) threads the bilayer. The Cytoplasmic segment spans residues 737 to 768 (ALLNNIIEIRLDAYKFVTQWRRPLASRAKDIG). A helical membrane pass occupies residues 769 to 789 (IWYGILEGIGILSVITNAFVI). The Extracellular portion of the chain corresponds to 790–885 (AITSDFIPRL…QFWHVLAARL (96 aa)). 2 N-linked (GlcNAc...) asparagine glycosylation sites follow: asparagine 824 and asparagine 837. The helical transmembrane segment at 886-906 (AFIIVFEHLVFCIKHLISYLI) threads the bilayer. Residues 907 to 955 (PDLPKDLRDRMRREKYLIQEMMYEAELERLQKERKERKKNGKAHHNEWP) are Cytoplasmic-facing.

This sequence belongs to the anoctamin family. In terms of tissue distribution, predominantly expressed in neuronal tissues. Expressed at low levels in ovary, uterus, heart and brain.

The protein resides in the cell membrane. The catalysed reaction is a 1,2-diacyl-sn-glycero-3-phospho-L-serine(in) = a 1,2-diacyl-sn-glycero-3-phospho-L-serine(out). The enzyme catalyses a beta-D-galactosyl-(1&lt;-&gt;1')-N-acylsphing-4-enine(out) = a beta-D-galactosyl-(1&lt;-&gt;1')-N-acylsphing-4-enine(in). It carries out the reaction a 1,2-diacyl-sn-glycero-3-phosphocholine(in) = a 1,2-diacyl-sn-glycero-3-phosphocholine(out). Has calcium-dependent phospholipid scramblase activity; scrambles phosphatidylserine, phosphatidylcholine and galactosylceramide. Does not exhibit calcium-activated chloride channel (CaCC) activity. The sequence is that of Anoctamin-4 from Mus musculus (Mouse).